The chain runs to 781 residues: Molybdenum cofactor sulfurase (781 aa).

Lysine 246 is modified (N6-(pyridoxal phosphate)lysine). Cysteine 413 is a catalytic residue. Residues 619–781 (GDAVAQWLSE…MTCGDVVIVE (163 aa)) form the MOSC domain. At serine 734 the chain carries Phosphoserine.

This sequence belongs to the class-V pyridoxal-phosphate-dependent aminotransferase family. MOCOS subfamily. The cofactor is pyridoxal 5'-phosphate.

The catalysed reaction is Mo-molybdopterin + L-cysteine + AH2 = thio-Mo-molybdopterin + L-alanine + A + H2O. The protein operates within cofactor biosynthesis; molybdopterin biosynthesis. Functionally, sulfurates the molybdenum cofactor. Sulfation of molybdenum is essential for xanthine dehydrogenase (XDH) and aldehyde oxidase (ADO) enzymes in which molybdenum cofactor is liganded by 1 oxygen and 1 sulfur atom in active form. In Drosophila erecta (Fruit fly), this protein is Molybdenum cofactor sulfurase.